The primary structure comprises 635 residues: 1-deoxy-D-xylulose-5-phosphate synthase (635 aa).

Residues histidine 76 and 117 to 119 (GHS) contribute to the thiamine diphosphate site. Residue aspartate 148 coordinates Mg(2+). Residues 149–150 (GA), asparagine 177, tyrosine 294, and glutamate 379 each bind thiamine diphosphate. Asparagine 177 lines the Mg(2+) pocket.

It belongs to the transketolase family. DXPS subfamily. Homodimer. The cofactor is Mg(2+). Thiamine diphosphate is required as a cofactor.

The catalysed reaction is D-glyceraldehyde 3-phosphate + pyruvate + H(+) = 1-deoxy-D-xylulose 5-phosphate + CO2. Its pathway is metabolic intermediate biosynthesis; 1-deoxy-D-xylulose 5-phosphate biosynthesis; 1-deoxy-D-xylulose 5-phosphate from D-glyceraldehyde 3-phosphate and pyruvate: step 1/1. Its function is as follows. Catalyzes the acyloin condensation reaction between C atoms 2 and 3 of pyruvate and glyceraldehyde 3-phosphate to yield 1-deoxy-D-xylulose-5-phosphate (DXP). This Neisseria meningitidis serogroup C (strain 053442) protein is 1-deoxy-D-xylulose-5-phosphate synthase.